A 155-amino-acid polypeptide reads, in one-letter code: Sec-independent protein translocase protein TatB (155 aa).

Residues 1 to 21 (MFGMGFFEILVVLVVAIIFLG) traverse the membrane as a helical segment. The segment at 109 to 155 (SLENNAPPKHLNKEVSNREVFHNEPPKEIELIANNNTTKHDKEKEHV) is disordered. Basic and acidic residues-rich tracts occupy residues 119–138 (LNKEVSNREVFHNEPPKEIE) and 146–155 (TKHDKEKEHV).

The protein belongs to the TatB family. In terms of assembly, the Tat system comprises two distinct complexes: a TatABC complex, containing multiple copies of TatA, TatB and TatC subunits, and a separate TatA complex, containing only TatA subunits. Substrates initially bind to the TatABC complex, which probably triggers association of the separate TatA complex to form the active translocon.

The protein localises to the cell inner membrane. Part of the twin-arginine translocation (Tat) system that transports large folded proteins containing a characteristic twin-arginine motif in their signal peptide across membranes. Together with TatC, TatB is part of a receptor directly interacting with Tat signal peptides. TatB may form an oligomeric binding site that transiently accommodates folded Tat precursor proteins before their translocation. This chain is Sec-independent protein translocase protein TatB, found in Helicobacter acinonychis (strain Sheeba).